Consider the following 784-residue polypeptide: E3 UFM1-protein ligase 1 homolog (784 aa).

The segment covering 398-414 has biased composition (basic and acidic residues); it reads QEVDHGVMEEEKADKRE. Residues 398–472 form a disordered region; sequence QEVDHGVMEE…ASNKKGGKDP (75 aa).

The protein belongs to the UFL1 family.

Its function is as follows. E3 UFM1-protein ligase that mediates ufmylation of target proteins. The protein is E3 UFM1-protein ligase 1 homolog of Anopheles gambiae (African malaria mosquito).